The following is a 118-amino-acid chain: Large ribosomal subunit protein uL18 (118 aa).

The disordered stretch occupies residues 1-24 (MISKPDKNKIRQKRHRRVRGKLSG). The span at 10 to 20 (IRQKRHRRVRG) shows a compositional bias: basic residues.

The protein belongs to the universal ribosomal protein uL18 family. Part of the 50S ribosomal subunit; part of the 5S rRNA/L5/L18/L25 subcomplex. Contacts the 5S and 23S rRNAs.

Functionally, this is one of the proteins that bind and probably mediate the attachment of the 5S RNA into the large ribosomal subunit, where it forms part of the central protuberance. The chain is Large ribosomal subunit protein uL18 from Streptococcus agalactiae serotype III (strain NEM316).